A 623-amino-acid chain; its full sequence is Myosin light chain kinase 2, skeletal/cardiac muscle (623 aa).

Disordered stretches follow at residues 1–179 (MATE…PSCP) and 204–251 (GVPV…QGDT). Alanine 2 carries the post-translational modification N-acetylalanine. Residues 20-31 (APKAAAGEGPPA) show a composition bias toward low complexity. Composition is skewed to basic and acidic residues over residues 32-43 (AEKDPGPPDPQK) and 49-89 (DPEK…EKGD). Positions 90-102 (GASAQPSASSQGP) are enriched in low complexity. Over residues 150–159 (GEAKEQKKVA) the composition is skewed to basic and acidic residues. 3 positions are modified to phosphoserine: serine 169, serine 175, and serine 177. A compositionally biased stretch (low complexity) spans 204–214 (GVPVTPGPTET). The span at 215–224 (EPAKVAEGEK) shows a compositional bias: basic and acidic residues. The 256-residue stretch at 312 to 567 (LNSKEALGGG…AAQCLAHPWL (256 aa)) folds into the Protein kinase domain. Residues 318–326 (LGGGKFGAV) and lysine 341 each bind ATP. Aspartate 433 (proton acceptor) is an active-site residue. The residue at position 472 (threonine 472) is a Phosphothreonine. The interval 601 to 613 (IAVSAANRFKKIS) is calmodulin-binding.

Belongs to the protein kinase superfamily. CAMK Ser/Thr protein kinase family. May interact with centrin.

It is found in the cytoplasm. The enzyme catalyses L-seryl-[myosin light chain] + ATP = O-phospho-L-seryl-[myosin light chain] + ADP + H(+). The catalysed reaction is L-threonyl-[myosin light chain] + ATP = O-phospho-L-threonyl-[myosin light chain] + ADP + H(+). Functionally, implicated in the level of global muscle contraction and cardiac function. Phosphorylates a specific serine in the N-terminus of a myosin light chain. The protein is Myosin light chain kinase 2, skeletal/cardiac muscle (MYLK2) of Bos taurus (Bovine).